The chain runs to 790 residues: Nuclear cap-binding protein subunit 1 (790 aa).

The disordered stretch occupies residues 1 to 26; the sequence is MSRRRHSDENDGGQPHKRRKTSDANE. Residues 3 to 20 carry the Nuclear localization signal motif; sequence RRRHSDENDGGQPHKRRK. Serine 7 carries the phosphoserine; by RPS6KB1 modification. Threonine 21 is subject to Phosphothreonine; by RPS6KB1. Serine 22 carries the phosphoserine; by RPS6KB1 modification. In terms of domain architecture, MIF4G spans 28–240; sequence EDHLESLICK…CLWAQIQKLK (213 aa). At serine 201 the chain carries Phosphoserine. Residue lysine 204 is modified to N6-acetyllysine. A coiled-coil region spans residues 643 to 713; sequence STIRKMNKHV…SEQKNLFLVI (71 aa). Lysine 684 participates in a covalent cross-link: Glycyl lysine isopeptide (Lys-Gly) (interchain with G-Cter in SUMO2). An N6-acetyllysine modification is found at lysine 698.

The protein belongs to the NCBP1 family. In terms of assembly, component of the nuclear cap-binding complex (CBC), a heterodimer composed of NCBP1/CBP80 and NCBP2/CBP20 that interacts with m7GpppG-capped RNA. Found in a U snRNA export complex containing PHAX/RNUXA, NCBP1/CBP80, NCBP2/CBP20, RAN, XPO1 and m7G-capped RNA. Identified in a IGF2BP1-dependent mRNP granule complex containing untranslated mRNAs. Interacts with PHAX/RNUXA, SRRT/ARS2, EIF4G2, IGF2BP1, HNRNPF, HNRNPH1, KIAA0427/CTIF, PARN, DROSHA, UPF1 and ALYREF/THOC4. May interact with EIF4G1; the interaction is however controversial since it is reported by PubMed:11340157, PubMed:15059963 and PubMed:15361857, but is not observed by PubMed:19648179. The large PER complex involved in the repression of transcriptional termination is composed of at least PER2, CDK9, DDX5, DHX9, NCBP1/CBP80 and POLR2A. Component of an alternative nuclear cap-binding complex (CBC) composed of NCBP1/CBP80 and NCBP3. Interacts with METTL3. Interacts with ZFC3H1 in a RNase-insensitive manner. Interacts with MTREX. Interacts with TASOR. Interacts with DHX34; the interaction is RNA-dependent. Interacts with KPNA3. Post-translationally, dephosphorylated at Thr-21 by the PNUTS-PP1 complex during RNA polymerase II transcription pause-release.

The protein localises to the nucleus. Its subcellular location is the cytoplasm. In terms of biological role, component of the cap-binding complex (CBC), which binds cotranscriptionally to the 5'-cap of pre-mRNAs and is involved in various processes such as pre-mRNA splicing, translation regulation, nonsense-mediated mRNA decay, RNA-mediated gene silencing (RNAi) by microRNAs (miRNAs) and mRNA export. The CBC complex is involved in mRNA export from the nucleus via its interaction with ALYREF/THOC4/ALY, leading to the recruitment of the mRNA export machinery to the 5'-end of mRNA and to mRNA export in a 5' to 3' direction through the nuclear pore. The CBC complex is also involved in mediating U snRNA and intronless mRNAs export from the nucleus. The CBC complex is essential for a pioneer round of mRNA translation, before steady state translation when the CBC complex is replaced by cytoplasmic cap-binding protein eIF4E. The pioneer round of mRNA translation mediated by the CBC complex plays a central role in nonsense-mediated mRNA decay (NMD), NMD only taking place in mRNAs bound to the CBC complex, but not on eIF4E-bound mRNAs. The CBC complex enhances NMD in mRNAs containing at least one exon-junction complex (EJC) via its interaction with UPF1, promoting the interaction between UPF1 and UPF2. The CBC complex is also involved in 'failsafe' NMD, which is independent of the EJC complex, while it does not participate in Staufen-mediated mRNA decay (SMD). During cell proliferation, the CBC complex is also involved in microRNAs (miRNAs) biogenesis via its interaction with SRRT/ARS2 and is required for miRNA-mediated RNA interference. The CBC complex also acts as a negative regulator of PARN, thereby acting as an inhibitor of mRNA deadenylation. In the CBC complex, NCBP1/CBP80 does not bind directly capped RNAs (m7GpppG-capped RNA) but is required to stabilize the movement of the N-terminal loop of NCBP2/CBP20 and lock the CBC into a high affinity cap-binding state with the cap structure. Associates with NCBP3 to form an alternative cap-binding complex (CBC) which plays a key role in mRNA export and is particularly important in cellular stress situations such as virus infections. The conventional CBC with NCBP2 binds both small nuclear RNA (snRNA) and messenger (mRNA) and is involved in their export from the nucleus whereas the alternative CBC with NCBP3 does not bind snRNA and associates only with mRNA thereby playing a role only in mRNA export. NCBP1/CBP80 is required for cell growth and viability. This Homo sapiens (Human) protein is Nuclear cap-binding protein subunit 1 (NCBP1).